The following is a 235-amino-acid chain: (5-formylfuran-3-yl)methyl phosphate synthase (235 aa).

Lys-27 acts as the Schiff-base intermediate with substrate in catalysis. Lys-85 (proton acceptor) is an active-site residue.

It belongs to the MfnB family. As to quaternary structure, homohexamer. Trimer of dimers.

The enzyme catalyses 2 D-glyceraldehyde 3-phosphate = 4-(hydroxymethyl)-2-furancarboxaldehyde phosphate + phosphate + 2 H2O. The protein operates within cofactor biosynthesis; methanofuran biosynthesis. Catalyzes the formation of 4-(hydroxymethyl)-2-furancarboxaldehyde phosphate (4-HFC-P) from two molecules of glyceraldehyde-3-P (GA-3-P). The chain is (5-formylfuran-3-yl)methyl phosphate synthase from Methanocaldococcus jannaschii (strain ATCC 43067 / DSM 2661 / JAL-1 / JCM 10045 / NBRC 100440) (Methanococcus jannaschii).